Reading from the N-terminus, the 265-residue chain is GTP cyclohydrolase FolE2 (265 aa).

The protein belongs to the GTP cyclohydrolase IV family.

The catalysed reaction is GTP + H2O = 7,8-dihydroneopterin 3'-triphosphate + formate + H(+). It participates in cofactor biosynthesis; 7,8-dihydroneopterin triphosphate biosynthesis; 7,8-dihydroneopterin triphosphate from GTP: step 1/1. Its function is as follows. Converts GTP to 7,8-dihydroneopterin triphosphate. The protein is GTP cyclohydrolase FolE2 of Bordetella petrii (strain ATCC BAA-461 / DSM 12804 / CCUG 43448).